The chain runs to 110 residues: Ig kappa chain V region 3547 (110 aa).

The tract at residues 1–23 is framework-1; that stretch reads AYDMTQTPSSVSAAVGGTVTINC. Residues 24–34 form a complementarity-determining-1 region; it reads QASEDISANLA. Positions 35-49 are framework-2; it reads WYQQKPGQPPKLLIY. Positions 50 to 56 are complementarity-determining-2; sequence AASDLAS. A framework-3 region spans residues 57-88; sequence GVPSRFKGSGSGTEYTLTISGVQCADAATYYC. The interval 89–99 is complementarity-determining-3; the sequence is QSADYSGSAVT. The segment at 100 to 109 is framework-4; the sequence is FGGGTEVVVK.

This is Ig kappa chain V region 3547 from Oryctolagus cuniculus (Rabbit).